Consider the following 306-residue polypeptide: Putative dihydroorotate dehydrogenase A (fumarate) (306 aa).

FMN is bound by residues serine 20 and 44–45 (KG). Substrate-binding positions include lysine 44 and 68–72 (NSIGL). Residues asparagine 98 and asparagine 126 each contribute to the FMN site. Residue asparagine 126 participates in substrate binding. The active-site Nucleophile is cysteine 129. FMN-binding residues include lysine 164 and isoleucine 190. 191-192 (NT) contributes to the substrate binding site. Residues glycine 216, 244–245 (GG), and 266–267 (GT) each bind FMN.

Belongs to the dihydroorotate dehydrogenase family. Type 1 subfamily. In terms of assembly, homodimer. It depends on FMN as a cofactor.

Its subcellular location is the cytoplasm. It catalyses the reaction (S)-dihydroorotate + fumarate = orotate + succinate. Its pathway is pyrimidine metabolism; UMP biosynthesis via de novo pathway. Functionally, catalyzes the conversion of dihydroorotate to orotate with fumarate as the electron acceptor. The sequence is that of Putative dihydroorotate dehydrogenase A (fumarate) (pyrD) from Aquifex aeolicus (strain VF5).